The sequence spans 125 residues: Fluoride-specific ion channel FluC (125 aa).

The next 4 helical transmembrane spans lie at 4-24 (VIYV…VGIV), 32-52 (FLPW…GLFA), 68-88 (LLIT…LDTV), and 100-120 (AFYV…GLAV). Na(+) is bound by residues glycine 75 and threonine 78.

This sequence belongs to the fluoride channel Fluc/FEX (TC 1.A.43) family.

Its subcellular location is the cell inner membrane. It carries out the reaction fluoride(in) = fluoride(out). With respect to regulation, na(+) is not transported, but it plays an essential structural role and its presence is essential for fluoride channel function. Its function is as follows. Fluoride-specific ion channel. Important for reducing fluoride concentration in the cell, thus reducing its toxicity. The protein is Fluoride-specific ion channel FluC of Allorhizobium ampelinum (strain ATCC BAA-846 / DSM 112012 / S4) (Agrobacterium vitis (strain S4)).